The chain runs to 409 residues: Pentatricopeptide repeat-containing protein At1g01970 (409 aa).

PPR repeat units follow at residues 164-198 (NARD…GFLI), 199-233 (DQVT…GEPL), 234-268 (DYRS…EICA), 269-303 (GREV…GITP), 304-338 (DVKL…GIKA), and 339-373 (TDKC…SIML).

This sequence belongs to the PPR family. P subfamily.

The chain is Pentatricopeptide repeat-containing protein At1g01970 from Arabidopsis thaliana (Mouse-ear cress).